Consider the following 219-residue polypeptide: Ribose-5-phosphate isomerase A (219 aa).

Substrate-binding positions include serine 28–threonine 31, aspartate 81–aspartate 84, and lysine 94–glycine 97. Residue glutamate 103 is the Proton acceptor of the active site. Residue lysine 121 participates in substrate binding.

Belongs to the ribose 5-phosphate isomerase family. As to quaternary structure, homodimer.

It catalyses the reaction aldehydo-D-ribose 5-phosphate = D-ribulose 5-phosphate. The protein operates within carbohydrate degradation; pentose phosphate pathway; D-ribose 5-phosphate from D-ribulose 5-phosphate (non-oxidative stage): step 1/1. Functionally, catalyzes the reversible conversion of ribose-5-phosphate to ribulose 5-phosphate. In Haemophilus influenzae (strain ATCC 51907 / DSM 11121 / KW20 / Rd), this protein is Ribose-5-phosphate isomerase A.